The chain runs to 248 residues: MFAIISSAKTLNFEKLAPKTELTIPMFLTLTNKLLSTLQSYSENQLSKIMNISAKLAHINKERFKDFDNQESKAAIFAYAGDVFNNIHIEKLTNHALNFLQSHLLIISGLYGVLKPLDTIKPYRLEMATKLNEINLTNFWQDEVTNYINKILAKQENKYLLNLASQEYSSVINPNKLKYQLVNVHFKENRNGKLSTIGINAKKARGAMVKVIANNLIDSPELLKNFSYLGYAFSTKHSSDNELVFIKS.

It belongs to the UPF0246 family.

In Rickettsia peacockii (strain Rustic), this protein is UPF0246 protein RPR_00055.